A 122-amino-acid polypeptide reads, in one-letter code: Large ribosomal subunit protein uL14 (122 aa).

It belongs to the universal ribosomal protein uL14 family. Part of the 50S ribosomal subunit. Forms a cluster with proteins L3 and L19. In the 70S ribosome, L14 and L19 interact and together make contacts with the 16S rRNA in bridges B5 and B8.

In terms of biological role, binds to 23S rRNA. Forms part of two intersubunit bridges in the 70S ribosome. This chain is Large ribosomal subunit protein uL14, found in Delftia acidovorans (strain DSM 14801 / SPH-1).